Reading from the N-terminus, the 194-residue chain is Thymidine kinase (194 aa).

ATP-binding positions include 15–22 (GPMFSGKS) and 89–92 (DEAH). Catalysis depends on E90, which acts as the Proton acceptor. The Zn(2+) site is built by C146, C149, C178, and C181.

The protein belongs to the thymidine kinase family. In terms of assembly, homotetramer.

It localises to the cytoplasm. The enzyme catalyses thymidine + ATP = dTMP + ADP + H(+). This is Thymidine kinase from Metamycoplasma arthritidis (strain 158L3-1) (Mycoplasma arthritidis).